The chain runs to 545 residues: Chaperonin GroEL 1 (545 aa).

Residues 30–33 (TLGP), K51, 87–91 (DGTTT), G415, and D495 each bind ATP.

This sequence belongs to the chaperonin (HSP60) family. In terms of assembly, forms a cylinder of 14 subunits composed of two heptameric rings stacked back-to-back. Interacts with the co-chaperonin GroES.

The protein localises to the cytoplasm. It carries out the reaction ATP + H2O + a folded polypeptide = ADP + phosphate + an unfolded polypeptide.. Its function is as follows. Together with its co-chaperonin GroES, plays an essential role in assisting protein folding. The GroEL-GroES system forms a nano-cage that allows encapsulation of the non-native substrate proteins and provides a physical environment optimized to promote and accelerate protein folding. The sequence is that of Chaperonin GroEL 1 from Sinorhizobium medicae (strain WSM419) (Ensifer medicae).